Consider the following 260-residue polypeptide: MPNLLQKTRKITSILQRSVDSLETELPYNTMASRLADIIDCNACIINGGGSLLGYAMKYKTNTDRVEEFFETRQFPDAYVKAASRVYDTEANLSVENELTIFPVESKDIYPDGLTTIAPIYGGGMRLGTLIIWRNDNEFSDDDLVLVEISSTVVGIQLLNLQTENLEETIRKQTAVNMAINTLSYSEMKAVAAILSELDGNEGRLTASVIADRIGITRSVIVNALRKLESAGIIESRSLGMKGTYLKVINEGIFDKLKEF.

The interval 1-159 (MPNLLQKTRK…SSTVVGIQLL (159 aa)) is GAF domain. The H-T-H motif DNA-binding region spans 207–226 (ASVIADRIGITRSVIVNALR).

It belongs to the CodY family.

It is found in the cytoplasm. Functionally, DNA-binding global transcriptional regulator which is involved in the adaptive response to starvation and acts by directly or indirectly controlling the expression of numerous genes in response to nutrient availability. During rapid exponential growth, CodY is highly active and represses genes whose products allow adaptation to nutrient depletion. This chain is Global transcriptional regulator CodY, found in Streptococcus equi subsp. zooepidemicus (strain MGCS10565).